The chain runs to 240 residues: Ribonuclease PH (240 aa).

Residues arginine 87 and 125-127 contribute to the phosphate site; that span reads GTR.

The protein belongs to the RNase PH family. Homohexameric ring arranged as a trimer of dimers.

The enzyme catalyses tRNA(n+1) + phosphate = tRNA(n) + a ribonucleoside 5'-diphosphate. Phosphorolytic 3'-5' exoribonuclease that plays an important role in tRNA 3'-end maturation. Removes nucleotide residues following the 3'-CCA terminus of tRNAs; can also add nucleotides to the ends of RNA molecules by using nucleoside diphosphates as substrates, but this may not be physiologically important. Probably plays a role in initiation of 16S rRNA degradation (leading to ribosome degradation) during starvation. This is Ribonuclease PH from Pseudomonas fluorescens (strain Pf0-1).